The primary structure comprises 161 residues: uncharacterized protein (161 aa).

This is an uncharacterized protein from Caenorhabditis elegans.